The following is a 1192-amino-acid chain: Chromosome partition protein Smc (1192 aa).

ATP is bound at residue 31–38; the sequence is PNGSGKSN. Coiled coils occupy residues 164 to 197, 234 to 292, 333 to 369, and 396 to 464; these read AGISRFKAKKVEAERRLERVQTNLTRLGDIVDEV, LTLS…RSEL, SAIADLRKTIAALEVAEAELADVQQKKESIAAKRDVE, and EHEA…DAKV. The region spanning 522-636 is the SMC hinge domain; the sequence is KDLVGIVADC…LVDTLATAIG (115 aa). 3 coiled-coil regions span residues 676–736, 772–902, and 986–1030; these read RSEL…AKLH, ELAV…EREA, and GSVN…INAD.

Belongs to the SMC family. As to quaternary structure, homodimer.

It is found in the cytoplasm. Required for chromosome condensation and partitioning. The sequence is that of Chromosome partition protein Smc from Rhodopirellula baltica (strain DSM 10527 / NCIMB 13988 / SH1).